The sequence spans 249 residues: Zinc import ATP-binding protein ZnuC (249 aa).

The ABC transporter domain occupies 1–219 (MRLVSLRNAT…PEYQALFGSG (219 aa)). Residue 36–43 (GPNGSGKS) participates in ATP binding.

It belongs to the ABC transporter superfamily. Zinc importer (TC 3.A.1.15.5) family. As to quaternary structure, the complex is composed of two ATP-binding proteins (ZnuC), two transmembrane proteins (ZnuB) and a solute-binding protein (ZnuA).

Its subcellular location is the cell inner membrane. The enzyme catalyses Zn(2+)(out) + ATP(in) + H2O(in) = Zn(2+)(in) + ADP(in) + phosphate(in) + H(+)(in). Functionally, part of the ABC transporter complex ZnuABC involved in zinc import. Responsible for energy coupling to the transport system. The sequence is that of Zinc import ATP-binding protein ZnuC from Ruegeria sp. (strain TM1040) (Silicibacter sp.).